A 304-amino-acid polypeptide reads, in one-letter code: Acetyl-coenzyme A carboxylase carboxyl transferase subunit beta (304 aa).

Residues 16-42 form a disordered region; the sequence is SSLPPKNSEGGLAYFDEPSPEQESTRK. Residues 48–304 form the CoA carboxyltransferase N-terminal domain; the sequence is LWVKCPKCGE…LLRYHQEGAV (257 aa). Residues C52, C55, C71, and C74 each contribute to the Zn(2+) site. Residues 52 to 74 form a C4-type zinc finger; that stretch reads CPKCGEALFNKDLVENQRVCLTC.

It belongs to the AccD/PCCB family. As to quaternary structure, acetyl-CoA carboxylase is a heterohexamer composed of biotin carboxyl carrier protein (AccB), biotin carboxylase (AccC) and two subunits each of ACCase subunit alpha (AccA) and ACCase subunit beta (AccD). Zn(2+) serves as cofactor.

The protein localises to the cytoplasm. The catalysed reaction is N(6)-carboxybiotinyl-L-lysyl-[protein] + acetyl-CoA = N(6)-biotinyl-L-lysyl-[protein] + malonyl-CoA. Its pathway is lipid metabolism; malonyl-CoA biosynthesis; malonyl-CoA from acetyl-CoA: step 1/1. Its function is as follows. Component of the acetyl coenzyme A carboxylase (ACC) complex. Biotin carboxylase (BC) catalyzes the carboxylation of biotin on its carrier protein (BCCP) and then the CO(2) group is transferred by the transcarboxylase to acetyl-CoA to form malonyl-CoA. The sequence is that of Acetyl-coenzyme A carboxylase carboxyl transferase subunit beta from Desulfitobacterium hafniense (strain Y51).